The sequence spans 96 residues: Mapk-regulated corepressor-interacting protein 1 (96 aa).

2 disordered regions span residues 1-28 and 76-96; these read MASS…GSEI and AFKP…AKKS. The short motif at 79–83 is the PXDLS motif element; the sequence is PVDLS. Positions 81-96 are enriched in basic and acidic residues; the sequence is DLSDLKRRNTQDAKKS.

It belongs to the MCRIP family.

The protein localises to the nucleus. The protein resides in the cytoplasm. It localises to the stress granule. Its function is as follows. May play a role in the regulation of the epithelial-mesenchymal transition. This Gallus gallus (Chicken) protein is Mapk-regulated corepressor-interacting protein 1 (MCRIP1).